A 227-amino-acid chain; its full sequence is Lipoprotein-releasing system ATP-binding protein LolD (227 aa).

The ABC transporter domain occupies 5 to 227 (LICQNITKHY…QDGILRESNS (223 aa)). 41–48 (GSSGSGKS) lines the ATP pocket.

Belongs to the ABC transporter superfamily. Lipoprotein translocase (TC 3.A.1.125) family. In terms of assembly, the complex is composed of two ATP-binding proteins (LolD) and two transmembrane proteins (LolC and LolE).

It is found in the cell inner membrane. Its function is as follows. Part of the ABC transporter complex LolCDE involved in the translocation of mature outer membrane-directed lipoproteins, from the inner membrane to the periplasmic chaperone, LolA. Responsible for the formation of the LolA-lipoprotein complex in an ATP-dependent manner. This Histophilus somni (strain 129Pt) (Haemophilus somnus) protein is Lipoprotein-releasing system ATP-binding protein LolD.